The chain runs to 446 residues: Methylenetetrahydrofolate--tRNA-(uracil-5-)-methyltransferase TrmFO (446 aa).

An FAD-binding site is contributed by 8–13 (GGGLAG).

It belongs to the MnmG family. TrmFO subfamily. It depends on FAD as a cofactor.

The protein resides in the cytoplasm. It catalyses the reaction uridine(54) in tRNA + (6R)-5,10-methylene-5,6,7,8-tetrahydrofolate + NADH + H(+) = 5-methyluridine(54) in tRNA + (6S)-5,6,7,8-tetrahydrofolate + NAD(+). It carries out the reaction uridine(54) in tRNA + (6R)-5,10-methylene-5,6,7,8-tetrahydrofolate + NADPH + H(+) = 5-methyluridine(54) in tRNA + (6S)-5,6,7,8-tetrahydrofolate + NADP(+). Catalyzes the folate-dependent formation of 5-methyl-uridine at position 54 (M-5-U54) in all tRNAs. The protein is Methylenetetrahydrofolate--tRNA-(uracil-5-)-methyltransferase TrmFO of Zymomonas mobilis subsp. mobilis (strain ATCC 31821 / ZM4 / CP4).